Reading from the N-terminus, the 483-residue chain is Protein nucleotidyltransferase YdiU (483 aa).

The ATP site is built by Gly-87, Gly-89, Arg-90, Lys-110, Asp-122, Gly-123, Arg-173, and Arg-180. The Proton acceptor role is filled by Asp-249. Mg(2+)-binding residues include Asn-250 and Asp-259. Asp-259 lines the ATP pocket.

This sequence belongs to the SELO family. It depends on Mg(2+) as a cofactor. Requires Mn(2+) as cofactor.

It catalyses the reaction L-seryl-[protein] + ATP = 3-O-(5'-adenylyl)-L-seryl-[protein] + diphosphate. It carries out the reaction L-threonyl-[protein] + ATP = 3-O-(5'-adenylyl)-L-threonyl-[protein] + diphosphate. The enzyme catalyses L-tyrosyl-[protein] + ATP = O-(5'-adenylyl)-L-tyrosyl-[protein] + diphosphate. The catalysed reaction is L-histidyl-[protein] + UTP = N(tele)-(5'-uridylyl)-L-histidyl-[protein] + diphosphate. It catalyses the reaction L-seryl-[protein] + UTP = O-(5'-uridylyl)-L-seryl-[protein] + diphosphate. It carries out the reaction L-tyrosyl-[protein] + UTP = O-(5'-uridylyl)-L-tyrosyl-[protein] + diphosphate. In terms of biological role, nucleotidyltransferase involved in the post-translational modification of proteins. It can catalyze the addition of adenosine monophosphate (AMP) or uridine monophosphate (UMP) to a protein, resulting in modifications known as AMPylation and UMPylation. The protein is Protein nucleotidyltransferase YdiU of Pectobacterium atrosepticum (strain SCRI 1043 / ATCC BAA-672) (Erwinia carotovora subsp. atroseptica).